Here is a 208-residue protein sequence, read N- to C-terminus: Large ribosomal subunit protein uL4 (208 aa).

Positions 47–84 (ARAARERSDVARTGKKFGRQKGGGTARHGDRRAPVFIG) are disordered. Residues 49–58 (AARERSDVAR) show a composition bias toward basic and acidic residues.

The protein belongs to the universal ribosomal protein uL4 family. Part of the 50S ribosomal subunit.

In terms of biological role, one of the primary rRNA binding proteins, this protein initially binds near the 5'-end of the 23S rRNA. It is important during the early stages of 50S assembly. It makes multiple contacts with different domains of the 23S rRNA in the assembled 50S subunit and ribosome. Functionally, forms part of the polypeptide exit tunnel. The sequence is that of Large ribosomal subunit protein uL4 from Rhizorhabdus wittichii (strain DSM 6014 / CCUG 31198 / JCM 15750 / NBRC 105917 / EY 4224 / RW1) (Sphingomonas wittichii).